Here is a 153-residue protein sequence, read N- to C-terminus: MPSAPDSPSLSVNVSGNVQKYSIKKKKVLNAEETELFELTQAAGVVIDQEVFKIIVDLLKMNVAPLAVFQTLKTMCAGQKVSETSTGDASSTSHTTAVPTESRVRSKMSSGQGEKSARESSSQRVPRQVSATRGQKSTKSSGSSSSSSQLTSN.

Residues 80–153 (KVSETSTGDA…SSSSSQLTSN (74 aa)) are disordered. 2 stretches are compositionally biased toward polar residues: residues 81–99 (VSET…TAVP) and 107–133 (KMSS…SATR). A compositionally biased stretch (low complexity) spans 134–153 (GQKSTKSSGSSSSSSQLTSN).

The protein belongs to the MOZART2 family. In terms of assembly, part of the gamma-tubulin complex. Interacts with TUBG1.

The protein localises to the cytoplasm. The protein resides in the cytoskeleton. It localises to the microtubule organizing center. Its subcellular location is the centrosome. It is found in the spindle. This chain is Mitotic-spindle organizing protein 2 (mzt2), found in Danio rerio (Zebrafish).